A 1096-amino-acid polypeptide reads, in one-letter code: Cation-transporting ATPase 5 (1096 aa).

Topologically, residues 1-19 are cytoplasmic; that stretch reads MDSIELKQLVPENDSEPGT. The helical transmembrane segment at 20–41 threads the bilayer; the sequence is PRQLLFQHYDISNEETIGIKPF. Residues 42 to 47 are Lumenal-facing; it reads KSIPAK. A helical transmembrane segment spans residues 48–70; it reads VYILRVTEILTLGLLHLILTWLP. The Cytoplasmic portion of the chain corresponds to 71-193; it reads EFRLKWIEAP…LVSTKKSIVT (123 aa). Residues 194–216 traverse the membrane as a helical segment; the sequence is ILLNEVLHPFYLFQAVSVLIWLC. The Lumenal portion of the chain corresponds to 217-220; it reads DSFV. The chain crosses the membrane as a helical span at residues 221–238; it reads FYSCCIVFISSYSIFLSV. Residues 239–391 are Cytoplasmic-facing; the sequence is KESKESENRI…NLRPSQLYLD (153 aa). The helical transmembrane segment at 392-412 threads the bilayer; it reads SMSFLKTMAILSFVSIVFIAI. The Lumenal portion of the chain corresponds to 413–425; it reads YLNLYNASFGHVV. Residues 426–447 traverse the membrane as a helical segment; sequence LRSLDVLTILVPPALPATLSVG. Residues 448-895 are Cytoplasmic-facing; it reads IANSIARLSR…SLILSHRCFQ (448 aa). The active-site 4-aspartylphosphate intermediate is Asp-480. Residues Asp-838 and Asp-842 each contribute to the Mg(2+) site. A helical transmembrane segment spans residues 896-915; sequence YMVLCAIVQFSGVFFLYLKN. Residues 916 to 922 lie on the Lumenal side of the membrane; it reads YNFNDNQ. A helical transmembrane segment spans residues 923–940; it reads FLFMDLLIIFPLSAAMSY. The Cytoplasmic segment spans residues 941-958; sequence FDPAQNLTSNRPNSTLFG. Residues 959 to 982 form a helical membrane-spanning segment; sequence KGRVKDLGIQSVLIWLSHGLLTLI. Over 983 to 1003 the chain is Lumenal; the sequence is LHELNWVELPEWQLEKSNTKN. Residues 1004-1026 form a helical membrane-spanning segment; that stretch reads VLVTSIFLLSSLQYLGICIGINQ. Topologically, residues 1027-1040 are cytoplasmic; sequence SSEFLSPIWKKKTY. The chain crosses the membrane as a helical span at residues 1041–1060; it reads VCLCTTIGLCNIYLCFANEN. The Lumenal portion of the chain corresponds to 1061–1075; sequence HIISRCLQITRLPTL. Residues 1076–1096 traverse the membrane as a helical segment; it reads YRFIILFMGVISCCLTSILNM.

Belongs to the cation transport ATPase (P-type) (TC 3.A.3) family. Type V subfamily.

It is found in the endoplasmic reticulum membrane. It localises to the golgi apparatus membrane. It catalyses the reaction ATP + H2O = ADP + phosphate + H(+). Plays a role in regulating calcium and manganese homeostasis responsible for cell cycle progression. The polypeptide is Cation-transporting ATPase 5 (cta5) (Schizosaccharomyces pombe (strain 972 / ATCC 24843) (Fission yeast)).